The following is a 241-amino-acid chain: Phosphatidylglycerophosphatase B (241 aa).

A helical transmembrane segment spans residues 1–21 (MFKRLSLYTLLLCLVPFFIWG). At 22 to 52 (ISYQWHGNSQLTQADYWLYLLTETGSVPYAL) the chain is on the periplasmic side. A helical transmembrane segment spans residues 53-62 (ITCVLFTLLF). Over 63–67 (AFLFK) the chain is Cytoplasmic. The chain crosses the membrane as a helical span at residues 68–91 (NPKQWILGVIVMGISVIATQAAKT). Topologically, residues 92 to 158 (GAKALFEEPR…ENETGYSFPS (67 aa)) are periplasmic. A phosphatase sequence motif I region spans residues 94 to 102 (KALFEEPRP). The tract at residues 157 to 160 (PSGH) is phosphatase sequence motif II. A helical transmembrane segment spans residues 159-173 (GHTIFAATWLMLAVG). Histidine 160 functions as the Proton donor; for a subset of substrates in the catalytic mechanism. The Cytoplasmic segment spans residues 174 to 184 (FTQLLGNRSFK). The chain crosses the membrane as a helical span at residues 185–204 (AKLLVVGIAVWGLLMLISRV). The phosphatase sequence motif III stretch occupies residues 202–213 (SRVRLGMHYPID). Residues 205 to 210 (RLGMHY) lie on the Periplasmic side of the membrane. Catalysis depends on histidine 209, which acts as the Nucleophile. A helical membrane pass occupies residues 211–235 (PIDLLVATLLAWLINSIIFAFLKKK). The Cytoplasmic portion of the chain corresponds to 236-241 (AIFVMK).

This sequence belongs to the PA-phosphatase related phosphoesterase family.

It is found in the cell inner membrane. The protein localises to the cell outer membrane. It catalyses the reaction a 1,2-diacyl-sn-glycero-3-phospho-(1'-sn-glycero-3'-phosphate) + H2O = a 1,2-diacyl-sn-glycero-3-phospho-(1'-sn-glycerol) + phosphate. The catalysed reaction is a 1,2-diacyl-sn-glycerol 3-diphosphate + H2O = a 1,2-diacyl-sn-glycero-3-phosphate + phosphate + H(+). It carries out the reaction a 1,2-diacyl-sn-glycero-3-phosphate + H2O = a 1,2-diacyl-sn-glycerol + phosphate. The enzyme catalyses di-trans,octa-cis-undecaprenyl diphosphate + H2O = di-trans,octa-cis-undecaprenyl phosphate + phosphate + H(+). The protein operates within phospholipid metabolism; phosphatidylglycerol biosynthesis; phosphatidylglycerol from CDP-diacylglycerol: step 2/2. Catalyzes the dephosphorylation of diacylglycerol diphosphate (DGPP) to phosphatidate (PA) and the subsequent dephosphorylation of PA to diacylglycerol (DAG). Also has undecaprenyl pyrophosphate phosphatase activity, required for the biosynthesis of the lipid carrier undecaprenyl phosphate. Can also use lysophosphatidic acid (LPA) and phosphatidylglycerophosphate as substrates. The pattern of activities varies according to subcellular location, PGP phosphatase activity is higher in the cytoplasmic membrane, whereas PA and LPA phosphatase activities are higher in the outer membrane. Activity is independent of a divalent cation ion and insensitive to inhibition by N-ethylmaleimide. This Haemophilus influenzae (strain ATCC 51907 / DSM 11121 / KW20 / Rd) protein is Phosphatidylglycerophosphatase B (pgpB).